The following is a 508-amino-acid chain: Histidine ammonia-lyase (508 aa).

The 5-imidazolinone (Ala-Gly) cross-link spans 143–145 (ASG). 2,3-didehydroalanine (Ser) is present on Ser144.

The protein belongs to the PAL/histidase family. Post-translationally, contains an active site 4-methylidene-imidazol-5-one (MIO), which is formed autocatalytically by cyclization and dehydration of residues Ala-Ser-Gly.

It localises to the cytoplasm. It catalyses the reaction L-histidine = trans-urocanate + NH4(+). Its pathway is amino-acid degradation; L-histidine degradation into L-glutamate; N-formimidoyl-L-glutamate from L-histidine: step 1/3. The protein is Histidine ammonia-lyase of Anaeromyxobacter dehalogenans (strain 2CP-C).